We begin with the raw amino-acid sequence, 466 residues long: Cysteine--tRNA ligase (466 aa).

Cysteine 29 contributes to the Zn(2+) binding site. Positions 31–41 match the 'HIGH' region motif; it reads ATVQAPPHIGH. The Zn(2+) site is built by cysteine 211, histidine 236, and glutamate 240. Positions 267-271 match the 'KMSKS' region motif; sequence KMSKS. ATP is bound at residue lysine 270.

It belongs to the class-I aminoacyl-tRNA synthetase family. In terms of assembly, monomer. Requires Zn(2+) as cofactor.

The protein localises to the cytoplasm. It catalyses the reaction tRNA(Cys) + L-cysteine + ATP = L-cysteinyl-tRNA(Cys) + AMP + diphosphate. This chain is Cysteine--tRNA ligase, found in Thermobifida fusca (strain YX).